We begin with the raw amino-acid sequence, 217 residues long: MNQTLLSSFGTPFERVENALAALREGRGVMVLDDEDRENEGDMIFPAETMTVEQMALTIRHGSGIVCLCITEDRRKQLDLPMMVENNTSAYGTGFTVTIEAAEGVTTGVSAADRITTVRAAIADGAKPSDLNRPGHVFPLRAQAGGVLTRGGHTEATIDLMTLAGFKPAGVLCELTNDDGTMARAPECIEFANKHNMALVTIEDLVAYRQAHERKAS.

Residues 37–38 (RE), Asp42, 150–154 (RGGHT), and Glu174 contribute to the D-ribulose 5-phosphate site. Glu38 serves as a coordination point for Mg(2+). His153 provides a ligand contact to Mg(2+).

The protein belongs to the DHBP synthase family. Homodimer. Mg(2+) serves as cofactor. The cofactor is Mn(2+).

It catalyses the reaction D-ribulose 5-phosphate = (2S)-2-hydroxy-3-oxobutyl phosphate + formate + H(+). It participates in cofactor biosynthesis; riboflavin biosynthesis; 2-hydroxy-3-oxobutyl phosphate from D-ribulose 5-phosphate: step 1/1. In terms of biological role, catalyzes the conversion of D-ribulose 5-phosphate to formate and 3,4-dihydroxy-2-butanone 4-phosphate. In Shigella boydii serotype 18 (strain CDC 3083-94 / BS512), this protein is 3,4-dihydroxy-2-butanone 4-phosphate synthase.